A 115-amino-acid chain; its full sequence is NADH-ubiquinone oxidoreductase chain 3 (115 aa).

3 helical membrane-spanning segments follow: residues 3-23 (LMLA…IMFW), 55-75 (FFLV…LLSL), and 84-104 (LPTM…SLAY).

This sequence belongs to the complex I subunit 3 family. Core subunit of respiratory chain NADH dehydrogenase (Complex I) which is composed of 45 different subunits. Interacts with TMEM186. Interacts with TMEM242.

The protein resides in the mitochondrion inner membrane. The catalysed reaction is a ubiquinone + NADH + 5 H(+)(in) = a ubiquinol + NAD(+) + 4 H(+)(out). In terms of biological role, core subunit of the mitochondrial membrane respiratory chain NADH dehydrogenase (Complex I) which catalyzes electron transfer from NADH through the respiratory chain, using ubiquinone as an electron acceptor. Essential for the catalytic activity of complex I. The chain is NADH-ubiquinone oxidoreductase chain 3 from Papio hamadryas (Hamadryas baboon).